The sequence spans 149 residues: D-aminoacyl-tRNA deacylase (149 aa).

Residues 137-138 (GP) carry the Gly-cisPro motif, important for rejection of L-amino acids motif.

The protein belongs to the DTD family. In terms of assembly, homodimer.

Its subcellular location is the cytoplasm. The catalysed reaction is glycyl-tRNA(Ala) + H2O = tRNA(Ala) + glycine + H(+). It catalyses the reaction a D-aminoacyl-tRNA + H2O = a tRNA + a D-alpha-amino acid + H(+). Functionally, an aminoacyl-tRNA editing enzyme that deacylates mischarged D-aminoacyl-tRNAs. Also deacylates mischarged glycyl-tRNA(Ala), protecting cells against glycine mischarging by AlaRS. Acts via tRNA-based rather than protein-based catalysis; rejects L-amino acids rather than detecting D-amino acids in the active site. By recycling D-aminoacyl-tRNA to D-amino acids and free tRNA molecules, this enzyme counteracts the toxicity associated with the formation of D-aminoacyl-tRNA entities in vivo and helps enforce protein L-homochirality. The polypeptide is D-aminoacyl-tRNA deacylase (Herminiimonas arsenicoxydans).